Here is a 318-residue protein sequence, read N- to C-terminus: Beta-ketoacyl-[acyl-carrier-protein] synthase III (318 aa).

Active-site residues include Cys112 and His245. The ACP-binding stretch occupies residues 246 to 250; the sequence is QANLR. Residue Asn275 is part of the active site.

Belongs to the thiolase-like superfamily. FabH family. As to quaternary structure, homodimer.

It is found in the cytoplasm. The catalysed reaction is malonyl-[ACP] + acetyl-CoA + H(+) = 3-oxobutanoyl-[ACP] + CO2 + CoA. It participates in lipid metabolism; fatty acid biosynthesis. Functionally, catalyzes the condensation reaction of fatty acid synthesis by the addition to an acyl acceptor of two carbons from malonyl-ACP. Catalyzes the first condensation reaction which initiates fatty acid synthesis and may therefore play a role in governing the total rate of fatty acid production. Possesses both acetoacetyl-ACP synthase and acetyl transacylase activities. Its substrate specificity determines the biosynthesis of branched-chain and/or straight-chain of fatty acids. This chain is Beta-ketoacyl-[acyl-carrier-protein] synthase III, found in Blochmanniella floridana.